The sequence spans 220 residues: Thiamine-phosphate synthase (220 aa).

4-amino-2-methyl-5-(diphosphooxymethyl)pyrimidine is bound by residues 39–43 and Asn80; that span reads QLRDK. Residues Asp81 and Asp100 each coordinate Mg(2+). Ser119 lines the 4-amino-2-methyl-5-(diphosphooxymethyl)pyrimidine pocket. Residue 145-147 coordinates 2-[(2R,5Z)-2-carboxy-4-methylthiazol-5(2H)-ylidene]ethyl phosphate; that stretch reads TPT. Lys148 lines the 4-amino-2-methyl-5-(diphosphooxymethyl)pyrimidine pocket. Gly176 is a 2-[(2R,5Z)-2-carboxy-4-methylthiazol-5(2H)-ylidene]ethyl phosphate binding site.

This sequence belongs to the thiamine-phosphate synthase family. Mg(2+) is required as a cofactor.

It catalyses the reaction 2-[(2R,5Z)-2-carboxy-4-methylthiazol-5(2H)-ylidene]ethyl phosphate + 4-amino-2-methyl-5-(diphosphooxymethyl)pyrimidine + 2 H(+) = thiamine phosphate + CO2 + diphosphate. The enzyme catalyses 2-(2-carboxy-4-methylthiazol-5-yl)ethyl phosphate + 4-amino-2-methyl-5-(diphosphooxymethyl)pyrimidine + 2 H(+) = thiamine phosphate + CO2 + diphosphate. The catalysed reaction is 4-methyl-5-(2-phosphooxyethyl)-thiazole + 4-amino-2-methyl-5-(diphosphooxymethyl)pyrimidine + H(+) = thiamine phosphate + diphosphate. Its pathway is cofactor biosynthesis; thiamine diphosphate biosynthesis; thiamine phosphate from 4-amino-2-methyl-5-diphosphomethylpyrimidine and 4-methyl-5-(2-phosphoethyl)-thiazole: step 1/1. Condenses 4-methyl-5-(beta-hydroxyethyl)thiazole monophosphate (THZ-P) and 2-methyl-4-amino-5-hydroxymethyl pyrimidine pyrophosphate (HMP-PP) to form thiamine monophosphate (TMP). The sequence is that of Thiamine-phosphate synthase from Mycobacterium marinum (strain ATCC BAA-535 / M).